We begin with the raw amino-acid sequence, 305 residues long: Syntaxin-112 (305 aa).

At Met-1 the chain carries N-acetylmethionine. A coiled-coil region spans residues 52-119 (QEIETIKTLI…TLIETLEKRN (68 aa)). Residues 210–272 (DLKTKERHEA…SGGTNSLYYA (63 aa)) form the t-SNARE coiled-coil homology domain.

Belongs to the syntaxin family. In terms of assembly, part of the t-SNARE complex.

Functionally, vesicle trafficking protein that functions in the secretory pathway. This chain is Syntaxin-112 (SYP112), found in Arabidopsis thaliana (Mouse-ear cress).